We begin with the raw amino-acid sequence, 227 residues long: Trypsin (227 aa).

Residues 1–223 (IVGGEDANVQ…YYDVLMEQIN (223 aa)) form the Peptidase S1 domain. Cysteine 27 and cysteine 43 are disulfide-bonded. Residues histidine 42 and aspartate 88 each act as charge relay system in the active site. Cystine bridges form between cysteine 150–cysteine 164 and cysteine 175–cysteine 199. The Charge relay system role is filled by serine 179.

This sequence belongs to the peptidase S1 family.

The catalysed reaction is Preferential cleavage: Arg-|-Xaa, Lys-|-Xaa.. The protein is Trypsin of Saccharopolyspora erythraea (Streptomyces erythraeus).